The primary structure comprises 505 residues: Maturase K (505 aa).

This sequence belongs to the intron maturase 2 family. MatK subfamily.

It localises to the plastid. Its subcellular location is the chloroplast. Its function is as follows. Usually encoded in the trnK tRNA gene intron. Probably assists in splicing its own and other chloroplast group II introns. The polypeptide is Maturase K (Spinacia oleracea (Spinach)).